Here is a 405-residue protein sequence, read N- to C-terminus: Eukaryotic translation initiation factor 5 (405 aa).

A GTP-binding site is contributed by 27 to 34 (GRGNGIKT). The tract at residues 143 to 202 (NPPDSVSGSKKKKKAATASANVRGGGLSISDIAQGKSQNAPSDGTGSSTPQHHDEDEDEL) is disordered. Phosphoserine occurs at positions 170 and 172. Over residues 177-192 (GKSQNAPSDGTGSSTP) the composition is skewed to polar residues. Thr-191 is subject to Phosphothreonine. A Phosphoserine modification is found at Ser-228. The 162-residue stretch at 241 to 402 (VNSELTQLDE…ETAESDDDEE (162 aa)) folds into the W2 domain. The residue at position 317 (Thr-317) is a Phosphothreonine. A Phosphoserine modification is found at Ser-397.

The protein belongs to the eIF-2-beta/eIF-5 family. As to quaternary structure, monomer. The factors eIF-1, eIF-2, eIF-3, TIF5/eIF-5 and methionyl-tRNAi form a multifactor complex (MFC) that may bind to the 40S ribosome. TIF32, NIP1 and TIF5/eIF-5 comprise a minimal 40S-ribosome-binding unit. Interacts with NIP1. Interacts with SUI3.

Its function is as follows. Catalyzes the hydrolysis of GTP bound to the 40S ribosomal initiation complex (40S.mRNA.Met-tRNA[F].eIF-2.GTP) with the subsequent joining of a 60S ribosomal subunit resulting in the release of eIF-2 and the guanine nucleotide. The subsequent joining of a 60S ribosomal subunit results in the formation of a functional 80S initiation complex (80S.mRNA.Met-tRNA[F]). eIF-5 is essential for cell viability. The chain is Eukaryotic translation initiation factor 5 (TIF5) from Saccharomyces cerevisiae (strain ATCC 204508 / S288c) (Baker's yeast).